The following is an 833-amino-acid chain: Protein PAT1 homolog 1 (833 aa).

Disordered regions lie at residues 279–313 (DMRE…MHGM), 398–427 (NIRQ…SGMP), and 492–549 (EEAT…DKKL). Residues 303-313 (PSLSPGGMHGM) show a composition bias toward low complexity. Over residues 398–408 (NIRQNGPQFSH) the composition is skewed to polar residues.

It belongs to the PAT1 family.

It is found in the cytoplasm. Its subcellular location is the P-body. Functionally, RNA-binding protein involved in deadenylation-dependent decapping of mRNAs, leading to the degradation of mRNAs. Acts as a scaffold protein that connects deadenylation and decapping machinery. Required for the recruitment of P-body components such as cgh-1 in somatic blastomeres. May play a role in recruiting the decapping enzyme dcap-1 to cytoplasmic puncta in the cell body of the posterior touch receptor neuron, PLM. The sequence is that of Protein PAT1 homolog 1 from Caenorhabditis elegans.